A 486-amino-acid polypeptide reads, in one-letter code: GTPase Obg (486 aa).

The Obg domain maps to serine 2–valine 159. The region spanning alanine 160–alanine 340 is the OBG-type G domain. Residues glycine 166 to serine 173, phenylalanine 191 to valine 195, aspartate 212 to glycine 215, asparagine 292 to aspartate 295, and serine 321 to valine 323 each bind GTP. 2 residues coordinate Mg(2+): serine 173 and threonine 193. In terms of domain architecture, OCT spans proline 358–proline 438. Residues arginine 462–glutamine 486 are disordered.

This sequence belongs to the TRAFAC class OBG-HflX-like GTPase superfamily. OBG GTPase family. In terms of assembly, monomer. It depends on Mg(2+) as a cofactor.

Its subcellular location is the cytoplasm. An essential GTPase which binds GTP, GDP and possibly (p)ppGpp with moderate affinity, with high nucleotide exchange rates and a fairly low GTP hydrolysis rate. Plays a role in control of the cell cycle, stress response, ribosome biogenesis and in those bacteria that undergo differentiation, in morphogenesis control. In Rhodococcus jostii (strain RHA1), this protein is GTPase Obg.